A 720-amino-acid polypeptide reads, in one-letter code: NAD(P)H-quinone oxidoreductase subunit 5, chloroplastic (720 aa).

16 helical membrane passes run 9 to 29 (WIVP…LLFF), 39 to 59 (IWAI…FNIL), 87 to 107 (FLID…GVLV), 125 to 145 (FAYL…PNLI), 147 to 167 (IYIF…FWFT), 189 to 209 (LLLG…EILF), 221 to 239 (VNLY…GPIA), 258 to 278 (TPIS…FLVA), 286 to 306 (LLPF…FLGA), 327 to 347 (LGYM…FHLI), 354 to 374 (ALLF…VGYS), 395 to 415 (GITF…ACFW), 434 to 454 (ISLV…FLTF), 530 to 550 (LFPL…GAPF), 590 to 610 (LSVV…FSLF), and 700 to 720 (LFGL…GAMF).

It belongs to the complex I subunit 5 family. NDH is composed of at least 16 different subunits, 5 of which are encoded in the nucleus.

The protein resides in the plastid. It is found in the chloroplast thylakoid membrane. It carries out the reaction a plastoquinone + NADH + (n+1) H(+)(in) = a plastoquinol + NAD(+) + n H(+)(out). The enzyme catalyses a plastoquinone + NADPH + (n+1) H(+)(in) = a plastoquinol + NADP(+) + n H(+)(out). Its function is as follows. NDH shuttles electrons from NAD(P)H:plastoquinone, via FMN and iron-sulfur (Fe-S) centers, to quinones in the photosynthetic chain and possibly in a chloroplast respiratory chain. The immediate electron acceptor for the enzyme in this species is believed to be plastoquinone. Couples the redox reaction to proton translocation, and thus conserves the redox energy in a proton gradient. This is NAD(P)H-quinone oxidoreductase subunit 5, chloroplastic (ndhF) from Physcomitrium patens (Spreading-leaved earth moss).